Consider the following 360-residue polypeptide: C-C chemokine receptor type 4 (360 aa).

Residues Met1 to Glu39 lie on the Extracellular side of the membrane. Residues Leu40–Tyr67 traverse the membrane as a helical segment. At Lys68–Tyr77 the chain is on the cytoplasmic side. Residues Leu78–Tyr98 traverse the membrane as a helical segment. At Ala99 to Lys111 the chain is on the extracellular side. A disulfide bridge links Cys110 with Cys187. The helical transmembrane segment at Met112 to Ile133 threads the bilayer. Over Asp134–Thr150 the chain is Cytoplasmic. Residues Leu151–Phe175 form a helical membrane-spanning segment. At Ser176–Ile206 the chain is on the extracellular side. N-linked (GlcNAc...) asparagine glycans are attached at residues Asn183 and Asn194. Residues Asn207–Ile226 form a helical membrane-spanning segment. The Cytoplasmic segment spans residues Arg227–Lys242. The helical transmembrane segment at Met243–Leu267 threads the bilayer. Over Val268–Tyr284 the chain is Extracellular. The chain crosses the membrane as a helical span at residues Ala285 to Gly308. Topologically, residues Glu309–Leu360 are cytoplasmic.

It belongs to the G-protein coupled receptor 1 family. In natural killer cells, CCL22 binding induces phosphorylation on yet undefined Ser/Thr residues, most probably by beta-adrenergic receptor kinases 1 and 2. In terms of tissue distribution, predominantly expressed in the thymus, in peripheral blood leukocytes, including T-cells, mostly CD4+ cells, and basophils, and in platelets; at lower levels, in the spleen and in monocytes. Detected also in macrophages, IL-2-activated natural killer cells and skin-homing memory T-cells, mostly the ones expressing the cutaneous lymphocyte antigen (CLA). Expressed in brain microvascular and coronary artery endothelial cells.

Its subcellular location is the cell membrane. High affinity receptor for the C-C type chemokines CCL17/TARC, CCL22/MDC and CKLF isoform 1/CKLF1. The activity of this receptor is mediated by G(i) proteins which activate a phosphatidylinositol-calcium second messenger system. Can function as a chemoattractant homing receptor on circulating memory lymphocytes and as a coreceptor for some primary HIV-2 isolates. In the CNS, could mediate hippocampal-neuron survival. The polypeptide is C-C chemokine receptor type 4 (CCR4) (Homo sapiens (Human)).